We begin with the raw amino-acid sequence, 173 residues long: Transcription factor E (173 aa).

An HTH TFE/IIEalpha-type domain is found at Asn-3–Pro-88.

It belongs to the TFE family. In terms of assembly, monomer. Interaction with RNA polymerase subunits RpoF and RpoE is necessary for Tfe stimulatory transcription activity. Able to interact with Tbp and RNA polymerase in the absence of DNA promoter. Interacts both with the preinitiation and elongation complexes.

Transcription factor that plays a role in the activation of archaeal genes transcribed by RNA polymerase. Facilitates transcription initiation by enhancing TATA-box recognition by TATA-box-binding protein (Tbp), and transcription factor B (Tfb) and RNA polymerase recruitment. Not absolutely required for transcription in vitro, but particularly important in cases where Tbp or Tfb function is not optimal. It dynamically alters the nucleic acid-binding properties of RNA polymerases by stabilizing the initiation complex and destabilizing elongation complexes. Seems to translocate with the RNA polymerase following initiation and acts by binding to the non template strand of the transcription bubble in elongation complexes. This chain is Transcription factor E, found in Methanococcus aeolicus (strain ATCC BAA-1280 / DSM 17508 / OCM 812 / Nankai-3).